The following is a 718-amino-acid chain: Polyribonucleotide nucleotidyltransferase (718 aa).

Residues Asp-493 and Asp-499 each coordinate Mg(2+). Residues 560–619 enclose the KH domain; the sequence is PRMITIKINPEKIRDVIGKGGSVIRALTEETGTTIDISDDGVVTIASTSSEGMAEAKKRI. Positions 629–697 constitute an S1 motif domain; that stretch reads GQVYEGTVLK…EKGRVRLSAK (69 aa).

Belongs to the polyribonucleotide nucleotidyltransferase family. It depends on Mg(2+) as a cofactor.

The protein localises to the cytoplasm. It carries out the reaction RNA(n+1) + phosphate = RNA(n) + a ribonucleoside 5'-diphosphate. Its function is as follows. Involved in mRNA degradation. Catalyzes the phosphorolysis of single-stranded polyribonucleotides processively in the 3'- to 5'-direction. The polypeptide is Polyribonucleotide nucleotidyltransferase (Paraburkholderia phytofirmans (strain DSM 17436 / LMG 22146 / PsJN) (Burkholderia phytofirmans)).